The primary structure comprises 405 residues: Replication factor C large subunit (405 aa).

Position 47-54 (47-54) interacts with ATP; it reads GPPGVGKT.

The protein belongs to the activator 1 small subunits family. RfcL subfamily. Heteromultimer composed of small subunits (RfcS) and large subunits (RfcL).

Functionally, part of the RFC clamp loader complex which loads the PCNA sliding clamp onto DNA. This is Replication factor C large subunit from Saccharolobus islandicus (strain L.S.2.15 / Lassen #1) (Sulfolobus islandicus).